The chain runs to 108 residues: uncharacterized protein (108 aa).

Residues 7–27 (FIPMLLVANAAPYFFYPIFML) form a helical membrane-spanning segment.

The protein to N.crassa NCU05373.1.

It localises to the membrane. This is an uncharacterized protein from Schizosaccharomyces pombe (strain 972 / ATCC 24843) (Fission yeast).